A 93-amino-acid polypeptide reads, in one-letter code: Putative regulatory protein Amet_2791 (93 aa).

Belongs to the RemA family.

This Alkaliphilus metalliredigens (strain QYMF) protein is Putative regulatory protein Amet_2791.